The chain runs to 326 residues: MTSSMSPAPAPAYAQVMEDMEKGKELAAQLQGLLRDSPEAGRFVDQILHTFSRAMRALDKAAVSAAGGEGSEVQSEVTCGGGASAGGKRKAPAADRKANCRRRTQQSSGNSVVVKNLDDGQAWRKYGQKEIQNSKHPKAYFRCTHKYDQLCTAQRQVQRCDDDPASYRVTYIGEHTCRDPATAPIIAAHVIHQVAAGDNDDGCGGLQAGSRLISFVAAPAAPVDAAAAPTTSTITTVTAPGPLLQPLKVEGGVGSSDQEEVLSSLTPGSSAARGGGGGGGVAGPFGPDQGDVTSSLHWSYDAVAGMEFFKNDEVVFDLDDIMGLSF.

2 disordered regions span residues 67-114 (GGEG…SVVV) and 252-288 (GVGS…FGPD). The WRKY DNA-binding region spans 112-180 (VVVKNLDDGQ…YIGEHTCRDP (69 aa)). Over residues 273-283 (RGGGGGGGVAG) the composition is skewed to gly residues.

This sequence belongs to the WRKY group III family. Expressed in aleurone cells.

Its subcellular location is the nucleus. Its function is as follows. Transcriptional activator involved in defense responses against pathogens. Acts as a positive regulator of defense responses against the rice blast fungus Magnaporthe oryzae. Acts through W-boxes, which are cis-elements that are enriched in the promoters of several defense-related genes. Plays an important role in the benzothiadiazole-induced disease resistance by mediating salicylic acid (SA) defense signaling pathway, independently of the disease resistance gene NPR1/NH1. Acts as a negative regulator of defense responses against the bacterial blight Xanthomonas oryzae pv oryzae (Xoo) and the bacterial streak Xanthomonas oryzae pv oryzicola (Xoc). Acts downstream of abscisic acid (ABA) signaling in response to the rice blast fungus. ABA is a negative regulator of defense responses that interacts antagonistically with salicylic acid (SA) signaling pathway. Acts as a negative regulator of ABA signaling that suppresses growth of seedlings. Does not seem to be involved in the regulation of salt stress response. Acts as a negative regulator of cold stress response. Acts as a negative regulator of drought stress response. The sequence is that of Transcription factor WRKY45-1 from Oryza sativa subsp. japonica (Rice).